The following is a 1159-amino-acid chain: Reverse gyrase 2 (1159 aa).

The RG N-terminal-type zinc-finger motif lies at 1 to 40; it reads MALELIERGCPNCGGVISSDRLEKGLPCSKCLPKPTEEKV. Positions 10, 13, 28, and 31 each coordinate Zn(2+). Residues Gln-82 and 99-106 contribute to the ATP site; that span reads APTGVGKT. Residues 86 to 275 form the Helicase ATP-binding domain; that stretch reads AKRVFMNQSF…LFRNLLGFDV (190 aa). The short motif at 196–199 is the DEAD box element; that stretch reads DDID. Residues 583–1159 are topoisomerase I; that stretch reads DLFKTTLVIV…LLKEEKAFKK (577 aa). Residues 587-743 enclose the Toprim domain; the sequence is TTLVIVESPN…NIKRAEFHEV (157 aa). Positions 593 and 712 each coordinate Mg(2+). The Topo IA-type catalytic domain maps to 759 to 1152; it reads DLNLVKAQLV…EVHRIKVLLK (394 aa). The active-site O-(5'-phospho-DNA)-tyrosine intermediate is the Tyr-902.

The protein in the N-terminal section; belongs to the DEAD box helicase family. DDVD subfamily. This sequence in the C-terminal section; belongs to the type IA topoisomerase family. Monomer. Zn(2+) serves as cofactor. It depends on Mg(2+) as a cofactor.

It is found in the cytoplasm. It catalyses the reaction ATP + H2O = ADP + phosphate + H(+). In terms of biological role, modifies the topological state of DNA by introducing positive supercoils in an ATP-dependent process, increasing the linking number in steps of +1. Binds to single-stranded DNA, transiently cleaves and then rejoins the ends, introducing a positive supercoil in the process. The scissile phosphodiester is attacked by the catalytic tyrosine of the enzyme, resulting in the formation of a DNA-(5'-phosphotyrosyl)-enzyme intermediate. Probably involved in rewinding DNA strands in regions of the chromosome that have opened up to allow replication, transcription, DNA repair and/or for DNA protection. The sequence is that of Reverse gyrase 2 from Aquifex aeolicus (strain VF5).